Reading from the N-terminus, the 216-residue chain is Phosphorylated carbohydrates phosphatase TM_1254 (216 aa).

Asp-7 acts as the Nucleophile in catalysis.

Belongs to the HAD-like hydrolase superfamily. The cofactor is Co(2+). Mg(2+) is required as a cofactor. Requires Mn(2+) as cofactor. Ni(2+) serves as cofactor.

Functionally, displays high phosphatase activity toward erythrose 4-phosphate, fructose 6-phosphate, 2-deoxyglucose 6-phosphate, and mannose 6-phosphate. May have a role in the intracellular metabolism of many phosphorylated carbohydrates. This Thermotoga maritima (strain ATCC 43589 / DSM 3109 / JCM 10099 / NBRC 100826 / MSB8) protein is Phosphorylated carbohydrates phosphatase TM_1254.